Consider the following 99-residue polypeptide: Large ribosomal subunit protein bL21 (99 aa).

This sequence belongs to the bacterial ribosomal protein bL21 family. Part of the 50S ribosomal subunit. Contacts protein L20.

Functionally, this protein binds to 23S rRNA in the presence of protein L20. In Mesoplasma florum (strain ATCC 33453 / NBRC 100688 / NCTC 11704 / L1) (Acholeplasma florum), this protein is Large ribosomal subunit protein bL21.